The following is a 169-amino-acid chain: uncharacterized protein (169 aa).

N-linked (GlcNAc...) asparagine; by host glycans are attached at residues Asn-13, Asn-29, Asn-39, and Asn-48. The Cell attachment site signature appears at 109-111 (RGD). Asn-135 carries N-linked (GlcNAc...) asparagine; by host glycosylation. Residues 145 to 165 (IYHMAIVYILIMYQIYILSLI) traverse the membrane as a helical segment.

The protein localises to the membrane. This is an uncharacterized protein from Acanthamoeba polyphaga (Amoeba).